We begin with the raw amino-acid sequence, 256 residues long: uncharacterized protein (256 aa).

This sequence belongs to the methyltransferase superfamily.

It localises to the cytoplasm. The protein localises to the nucleus. In terms of biological role, probable methyltransferase. This is an uncharacterized protein from Schizosaccharomyces pombe (strain 972 / ATCC 24843) (Fission yeast).